A 263-amino-acid chain; its full sequence is Leucyl/phenylalanyl-tRNA--protein transferase (263 aa).

The protein belongs to the L/F-transferase family.

The protein resides in the cytoplasm. The catalysed reaction is N-terminal L-lysyl-[protein] + L-leucyl-tRNA(Leu) = N-terminal L-leucyl-L-lysyl-[protein] + tRNA(Leu) + H(+). The enzyme catalyses N-terminal L-arginyl-[protein] + L-leucyl-tRNA(Leu) = N-terminal L-leucyl-L-arginyl-[protein] + tRNA(Leu) + H(+). It catalyses the reaction L-phenylalanyl-tRNA(Phe) + an N-terminal L-alpha-aminoacyl-[protein] = an N-terminal L-phenylalanyl-L-alpha-aminoacyl-[protein] + tRNA(Phe). In terms of biological role, functions in the N-end rule pathway of protein degradation where it conjugates Leu, Phe and, less efficiently, Met from aminoacyl-tRNAs to the N-termini of proteins containing an N-terminal arginine or lysine. The chain is Leucyl/phenylalanyl-tRNA--protein transferase from Novosphingobium aromaticivorans (strain ATCC 700278 / DSM 12444 / CCUG 56034 / CIP 105152 / NBRC 16084 / F199).